We begin with the raw amino-acid sequence, 211 residues long: MASTSTLLLPSLSSKNLHIAVPIRTNSFVRRTTKFSTKCSSNPESKDQFINLTPAPESINTTSAEKFPIEKRRRSEIIRDRTQRGIEKPEPPNFEIGWKRTKEINLEKPKGYVIMDFLEKFEALMAREFGSKELLAKAGEIVAERAREEAEVLRDEGKVEERMVTELFRVLKLMEMDLAMVKASVKDETLSQRIEQARARCRQAILVANSF.

The N-terminal 38 residues, 1-38 (MASTSTLLLPSLSSKNLHIAVPIRTNSFVRRTTKFSTK), are a transit peptide targeting the chloroplast. Positions 136 to 163 (AKAGEIVAERAREEAEVLRDEGKVEERM) form a coiled coil.

Biogenesis factor component of the plastidial NDH subcomplex A.

The protein localises to the plastid. It localises to the chloroplast. It is found in the chloroplast stroma. Its function is as follows. Required for both formation and activity of the chloroplast NAD(P)H dehydrogenase (NDH) complex of the photosynthetic electron transport chain. Functions in assembly or stabilization of the NDH complex; probably involved, together with NdhO and NdhH, in the formation of an NDH subcomplex A assembly intermediate (NAI500). This is Protein CHLORORESPIRATORY REDUCTION 41, chloroplastic from Arabidopsis thaliana (Mouse-ear cress).